Here is a 135-residue protein sequence, read N- to C-terminus: Large ribosomal subunit protein uL16c (135 aa).

This sequence belongs to the universal ribosomal protein uL16 family. Part of the 50S ribosomal subunit.

It is found in the plastid. Its subcellular location is the chloroplast. The polypeptide is Large ribosomal subunit protein uL16c (Gossypium barbadense (Sea Island cotton)).